Consider the following 329-residue polypeptide: Ubiquitin carboxyl-terminal hydrolase isozyme L5 (329 aa).

Residues 7-225 (EWCLMESDPG…IRFNLMAIVS (219 aa)) form the UCH catalytic domain. N6-succinyllysine is present on lysine 47. The active-site Nucleophile is the cysteine 88. Lysine 158 is subject to N6-acetyllysine. The active-site Proton donor is the histidine 164. Lysine 289 carries the post-translational modification N6-succinyllysine. Residues 291 to 319 (NYLPFIMELLKTLAEHQQLIPLVEKAKEK) enclose the ULD domain. Residues 313–329 (VEKAKEKQNAKKAQETK) form an interaction with ADRM1 region.

The protein belongs to the peptidase C12 family. Component of the 19S (PA700) regulatory complex of the 26S proteasome. Interacts with ADRM1 and NFRKB. Component of the INO80 complex; specifically part of a complex module associated with N-terminus of INO80.

It is found in the cytoplasm. Its subcellular location is the nucleus. The enzyme catalyses Thiol-dependent hydrolysis of ester, thioester, amide, peptide and isopeptide bonds formed by the C-terminal Gly of ubiquitin (a 76-residue protein attached to proteins as an intracellular targeting signal).. Its activity is regulated as follows. Activated by ADRM1. Inhibited by interaction with NFRKB. Protease that specifically cleaves 'Lys-48'-linked polyubiquitin chains. Deubiquitinating enzyme associated with the 19S regulatory subunit of the 26S proteasome. Putative regulatory component of the INO80 complex; however is inactive in the INO80 complex and is activated by a transient interaction of the INO80 complex with the proteasome via ADRM1. This chain is Ubiquitin carboxyl-terminal hydrolase isozyme L5 (Uchl5), found in Mus musculus (Mouse).